Reading from the N-terminus, the 290-residue chain is Appressorium protein ROW2 (290 aa).

A signal peptide spans 1–19; the sequence is MFTKSVFIALVAGVLGVTA. The segment at 266-290 is disordered; sequence AIKTPSKRSVMATHVKRSPEWEEEP.

The protein localises to the secreted. The protein resides in the nucleus. Functionally, plays a role in the formation of the appressorium, a specialized infection structure with the purpose of penetrating the host surface, and is required for proper remodeling of the appressorium wall and vesicle secretion. The sequence is that of Appressorium protein ROW2 from Mycosarcoma maydis (Corn smut fungus).